We begin with the raw amino-acid sequence, 206 residues long: N-(5'-phosphoribosyl)anthranilate isomerase (206 aa).

Belongs to the TrpF family.

It carries out the reaction N-(5-phospho-beta-D-ribosyl)anthranilate = 1-(2-carboxyphenylamino)-1-deoxy-D-ribulose 5-phosphate. It functions in the pathway amino-acid biosynthesis; L-tryptophan biosynthesis; L-tryptophan from chorismate: step 3/5. In Chlamydia felis (strain Fe/C-56) (Chlamydophila felis), this protein is N-(5'-phosphoribosyl)anthranilate isomerase.